Here is a 293-residue protein sequence, read N- to C-terminus: N-acetylneuraminate lyase (293 aa).

Residues Ser47 and Thr48 each coordinate aceneuramate. Tyr136 serves as the catalytic Proton donor. Residue Lys164 is the Schiff-base intermediate with substrate of the active site. Aceneuramate-binding residues include Thr166, Gly188, Asp190, Glu191, and Ser207.

The protein belongs to the DapA family. NanA subfamily. In terms of assembly, homotetramer.

It localises to the cytoplasm. It carries out the reaction aceneuramate = aldehydo-N-acetyl-D-mannosamine + pyruvate. Its pathway is amino-sugar metabolism; N-acetylneuraminate degradation; D-fructose 6-phosphate from N-acetylneuraminate: step 1/5. In terms of biological role, catalyzes the reversible aldol cleavage of N-acetylneuraminic acid (sialic acid; Neu5Ac) to form pyruvate and N-acetylmannosamine (ManNAc) via a Schiff base intermediate. This is N-acetylneuraminate lyase from Haemophilus influenzae (strain ATCC 51907 / DSM 11121 / KW20 / Rd).